Here is a 152-residue protein sequence, read N- to C-terminus: Deoxyuridine 5'-triphosphate nucleotidohydrolase (152 aa).

Substrate is bound by residues 72–74, asparagine 85, and 89–91; these read RSG and TID.

Belongs to the dUTPase family. It depends on Mg(2+) as a cofactor.

The catalysed reaction is dUTP + H2O = dUMP + diphosphate + H(+). The protein operates within pyrimidine metabolism; dUMP biosynthesis; dUMP from dCTP (dUTP route): step 2/2. In terms of biological role, this enzyme is involved in nucleotide metabolism: it produces dUMP, the immediate precursor of thymidine nucleotides and it decreases the intracellular concentration of dUTP so that uracil cannot be incorporated into DNA. This Afipia carboxidovorans (strain ATCC 49405 / DSM 1227 / KCTC 32145 / OM5) (Oligotropha carboxidovorans) protein is Deoxyuridine 5'-triphosphate nucleotidohydrolase.